We begin with the raw amino-acid sequence, 480 residues long: MKKLLFVLLTITLLASCQKVSVEQTKVIPEPIKKTTLNVGTLYGAQIFVTTGQGEAGFDFEMASRFAEYLKLELKMKPYSNISELYQALESGEVDLLAAGLADTPTRREKFRLGPPLYRVNQVLVYKQGTPIPKDVSTLEDNITVITDSSFVETLSQLQKLYPELVWEQEKEKDSEELMAMIARGEITYTIADSSTFEINRRYLPELRAGPILKEKQAIVWLLPPKNSDQLMSDLLTFWHYEKRSGTLAHLNEKYFAHVKRFDYVDTRAFLRAIDNKLPKYKESFQHYANGIDWRKLAATAYQESHWNPNARSPTGVRGLMMLTLPTAKQVGIKNRLDPIQSIKGGAKYLNDILNRLPDSIPENQRMWFALASYNIGYGHVEDARKLAQSMGLNPSAWRDLKEVLPLLHKRKYYQRTRYGYARGNEAVHYVDSIRRYYDTLVWVDNQNQLLIDEKASAEESQLAEKIGGKQENLSGAQPQ.

The signal sequence occupies residues 1 to 15 (MKKLLFVLLTITLLA). The segment at 16–259 (SCQKVSVEQT…HLNEKYFAHV (244 aa)) is non-LT domain. The tract at residues 260 to 480 (KRFDYVDTRA…QENLSGAQPQ (221 aa)) is LT domain. E304 is a catalytic residue.

It in the N-terminal section; belongs to the bacterial solute-binding protein 3 family. This sequence in the C-terminal section; belongs to the transglycosylase Slt family.

The protein resides in the cell outer membrane. It catalyses the reaction Exolytic cleavage of the (1-&gt;4)-beta-glycosidic linkage between N-acetylmuramic acid (MurNAc) and N-acetylglucosamine (GlcNAc) residues in peptidoglycan, from either the reducing or the non-reducing ends of the peptidoglycan chains, with concomitant formation of a 1,6-anhydrobond in the MurNAc residue.. In terms of biological role, murein-degrading enzyme that degrades murein glycan strands and insoluble, high-molecular weight murein sacculi, with the concomitant formation of a 1,6-anhydromuramoyl product. Lytic transglycosylases (LTs) play an integral role in the metabolism of the peptidoglycan (PG) sacculus. Their lytic action creates space within the PG sacculus to allow for its expansion as well as for the insertion of various structures such as secretion systems and flagella. This Shewanella sediminis (strain HAW-EB3) protein is Membrane-bound lytic murein transglycosylase F.